A 565-amino-acid polypeptide reads, in one-letter code: Urocanate hydratase (565 aa).

NAD(+) is bound by residues 58 to 59 (GG), Gln136, 182 to 184 (GMG), Glu202, Arg207, 245 to 246 (NA), 266 to 270 (QTSAH), 276 to 277 (YL), and Tyr325. The active site involves Cys413. Gly495 is a binding site for NAD(+).

The protein belongs to the urocanase family. Requires NAD(+) as cofactor.

It is found in the cytoplasm. The enzyme catalyses 4-imidazolone-5-propanoate = trans-urocanate + H2O. Its pathway is amino-acid degradation; L-histidine degradation into L-glutamate; N-formimidoyl-L-glutamate from L-histidine: step 2/3. Functionally, catalyzes the conversion of urocanate to 4-imidazolone-5-propionate. This chain is Urocanate hydratase, found in Vibrio vulnificus (strain CMCP6).